A 250-amino-acid chain; its full sequence is Acetylglutamate kinase (250 aa).

Residues 41-42, arginine 63, and asparagine 156 contribute to the substrate site; that span reads GG.

It belongs to the acetylglutamate kinase family. ArgB subfamily.

It is found in the cytoplasm. The enzyme catalyses N-acetyl-L-glutamate + ATP = N-acetyl-L-glutamyl 5-phosphate + ADP. It functions in the pathway amino-acid biosynthesis; L-arginine biosynthesis; N(2)-acetyl-L-ornithine from L-glutamate: step 2/4. Functionally, catalyzes the ATP-dependent phosphorylation of N-acetyl-L-glutamate. The protein is Acetylglutamate kinase of Listeria monocytogenes serotype 4b (strain F2365).